The chain runs to 64 residues: Large ribosomal subunit protein bL35 (64 aa).

2 stretches are compositionally biased toward basic residues: residues 1 to 26 and 33 to 44; these read MPKM…KRSK and LTKKSPKRKRKL. The segment at 1-44 is disordered; that stretch reads MPKMKTHRGAAKRFKKTGTGKIKRSKAYTSHILTKKSPKRKRKL.

It belongs to the bacterial ribosomal protein bL35 family.

The sequence is that of Large ribosomal subunit protein bL35 from Alkaliphilus oremlandii (strain OhILAs) (Clostridium oremlandii (strain OhILAs)).